The chain runs to 426 residues: Tektin-1 (426 aa).

Coiled coils occupy residues 21 to 84 (KNQY…LEQL), 268 to 307 (LKETKAARDQLAAHLAKVMEEIACQEKNMTVLEKAILDQE), and 339 to 383 (KEVG…ENTI). Positions 396-426 (SNPLRDGGDQGQWARACAPTPSAEDGTSHTD) are disordered.

It belongs to the tektin family. As to quaternary structure, microtubule inner protein component of sperm flagellar doublet microtubules. In terms of processing, ubiquitinated, leading to its degradation. Deubiquitinated by USP16, promoting its stability.

It localises to the cytoplasm. Its subcellular location is the cytoskeleton. The protein localises to the cilium axoneme. The protein resides in the flagellum axoneme. In terms of biological role, microtubule inner protein (MIP) part of the dynein-decorated doublet microtubules (DMTs) in cilia and flagellar axoneme. Forms filamentous polymers in the walls of ciliary and flagellar microtubules. The protein is Tektin-1 (TEKT1) of Canis lupus familiaris (Dog).